Consider the following 578-residue polypeptide: Probable multidrug ABC transporter ATP-binding protein YbhF (578 aa).

2 consecutive ABC transporter domains span residues 6 to 237 (ITLN…LMTS) and 330 to 559 (IEAK…PDPT). Residues 40–47 (GPDGAGKT) and 362–369 (GPNGAGKS) each bind ATP.

This sequence belongs to the ABC transporter superfamily. The complex is probably composed of two ATP-binding proteins (YbhF) and two transmembrane proteins (YbhR and YbhS).

Part of the ABC transporter complex YbhFSR that could be involved in efflux of cefoperazone. Probably responsible for energy coupling to the transport system. The chain is Probable multidrug ABC transporter ATP-binding protein YbhF (ybhF) from Escherichia coli (strain K12).